Consider the following 157-residue polypeptide: Cyclic pyranopterin monophosphate synthase (157 aa).

Substrate is bound by residues 74–76 (MCH) and 110–111 (ME). Residue aspartate 125 is part of the active site.

It belongs to the MoaC family. Homohexamer; trimer of dimers.

The catalysed reaction is (8S)-3',8-cyclo-7,8-dihydroguanosine 5'-triphosphate = cyclic pyranopterin phosphate + diphosphate. It participates in cofactor biosynthesis; molybdopterin biosynthesis. Functionally, catalyzes the conversion of (8S)-3',8-cyclo-7,8-dihydroguanosine 5'-triphosphate to cyclic pyranopterin monophosphate (cPMP). The chain is Cyclic pyranopterin monophosphate synthase from Peptoclostridium acidaminophilum (Eubacterium acidaminophilum).